We begin with the raw amino-acid sequence, 156 residues long: MMHICHIEIDTQGLPAPTPEIEQERKVAIFDLLEENTFTLPHEDAPSGPYRLSLAIREKRLVFDIDTEDGAEAAEFHLSLAPFRQTVKDYWQICEAYFDAVKKLPPSQIEAIDMARRGIHNEGARLLQERLEGKAEIDTDTARRLFTLICVLHFGA.

Belongs to the UPF0262 family.

The protein is UPF0262 protein Jann_2882 of Jannaschia sp. (strain CCS1).